A 141-amino-acid polypeptide reads, in one-letter code: Hemoglobin subunit alpha-1 (141 aa).

Positions 1–141 constitute a Globin domain; that stretch reads VLSPEDKNNV…VSTVLTSKYR (141 aa). His-58 contributes to the O2 binding site. His-87 contacts heme b.

It belongs to the globin family. In terms of assembly, heterotetramer of two alpha chains and two beta chains. As to expression, red blood cells.

Involved in oxygen transport from the lung to the various peripheral tissues. The polypeptide is Hemoglobin subunit alpha-1 (Tadarida brasiliensis (Brazilian free-tailed bat)).